A 335-amino-acid chain; its full sequence is Glycerol-3-phosphate dehydrogenase [NAD(P)+] (335 aa).

S15, Y16, R36, and K110 together coordinate NADPH. Residues K110, G139, and T141 each contribute to the sn-glycerol 3-phosphate site. A143 contacts NADPH. K195, D248, S258, R259, and N260 together coordinate sn-glycerol 3-phosphate. K195 functions as the Proton acceptor in the catalytic mechanism. Residue R259 coordinates NADPH. NADPH contacts are provided by V283 and E285.

This sequence belongs to the NAD-dependent glycerol-3-phosphate dehydrogenase family.

It localises to the cytoplasm. The catalysed reaction is sn-glycerol 3-phosphate + NAD(+) = dihydroxyacetone phosphate + NADH + H(+). It catalyses the reaction sn-glycerol 3-phosphate + NADP(+) = dihydroxyacetone phosphate + NADPH + H(+). It functions in the pathway membrane lipid metabolism; glycerophospholipid metabolism. Its function is as follows. Catalyzes the reduction of the glycolytic intermediate dihydroxyacetone phosphate (DHAP) to sn-glycerol 3-phosphate (G3P), the key precursor for phospholipid synthesis. In Pseudoalteromonas translucida (strain TAC 125), this protein is Glycerol-3-phosphate dehydrogenase [NAD(P)+].